Reading from the N-terminus, the 275-residue chain is Transmembrane protein 45A (275 aa).

Helical transmembrane passes span 7–27 (HALPGTFFFIIGLWWCTKSIL), 51–71 (ILEGITIVGMALTGMAGEQFI), 100–120 (FFFGLLGVADILCFTISSLPV), 150–170 (IFVHQLLVLVVFLTGLVAFLE), and 218–238 (ILFLTICFCWHYAVTIVIVGM).

It belongs to the TMEM45 family.

Its subcellular location is the membrane. The polypeptide is Transmembrane protein 45A (TMEM45A) (Homo sapiens (Human)).